Consider the following 268-residue polypeptide: D-alanyl-D-alanine carboxypeptidase (268 aa).

Residues 25 to 47 (AFLWAFIISFTVCTLFLGWRLVS) form a helical membrane-spanning segment. Residues glutamine 151, 179–181 (WVA), and serine 186 each bind substrate. Zn(2+) is bound by residues histidine 188 and aspartate 195. Glutamate 238 functions as the Proton donor/acceptor in the catalytic mechanism. Histidine 241 contacts Zn(2+).

This sequence belongs to the peptidase M15B family. As to quaternary structure, monomer. The cofactor is Zn(2+).

Its subcellular location is the cell membrane. With respect to regulation, carboxypeptidase activity is insensitive to beta-lactams since it is not affected by penicillin G or ampicillin and is inhibited only by very high concentrations of cefalotin and cefoxitin. Its function is as follows. Carboxypeptidase that cleaves the C-terminal D-alanine residue from the peptidoglycan-derived pentapeptide L-Ala-gamma-D-Glu-L-Lys-D-Ala-D-Ala in vitro. Therefore, should contribute in vivo to the hydrolysis of the D-alanyl-D-alanine-containing peptidoglycan precursors. May increase the level of glycopeptide antibiotics resistance by decreasing the availability of D-Ala-D-Ala termini from the cell surface, which constitute the antibiotic target residues. The protein is D-alanyl-D-alanine carboxypeptidase of Enterococcus faecalis (strain ATCC 700802 / V583).